Here is a 320-residue protein sequence, read N- to C-terminus: Malate dehydrogenase (320 aa).

Residues 10–15 (GSGMIG) and D34 each bind NAD(+). Substrate-binding residues include R83 and R89. NAD(+) is bound by residues N96 and 119–121 (ITN). Positions 121 and 152 each coordinate substrate. H176 acts as the Proton acceptor in catalysis.

It belongs to the LDH/MDH superfamily. MDH type 3 family.

It catalyses the reaction (S)-malate + NAD(+) = oxaloacetate + NADH + H(+). Catalyzes the reversible oxidation of malate to oxaloacetate. In Brucella melitensis biotype 2 (strain ATCC 23457), this protein is Malate dehydrogenase.